The following is a 195-amino-acid chain: GTP cyclohydrolase-2 (195 aa).

48-52 contacts GTP; the sequence is RIHSE. 3 residues coordinate Zn(2+): cysteine 53, cysteine 64, and cysteine 66. Residues glutamine 69, 90-92, and threonine 112 each bind GTP; that span reads EGR. The active-site Proton acceptor is aspartate 124. The Nucleophile role is filled by arginine 126. Threonine 147 and lysine 152 together coordinate GTP.

The protein belongs to the GTP cyclohydrolase II family. Zn(2+) is required as a cofactor.

It carries out the reaction GTP + 4 H2O = 2,5-diamino-6-hydroxy-4-(5-phosphoribosylamino)-pyrimidine + formate + 2 phosphate + 3 H(+). It participates in cofactor biosynthesis; riboflavin biosynthesis; 5-amino-6-(D-ribitylamino)uracil from GTP: step 1/4. Catalyzes the conversion of GTP to 2,5-diamino-6-ribosylamino-4(3H)-pyrimidinone 5'-phosphate (DARP), formate and pyrophosphate. This chain is GTP cyclohydrolase-2, found in Campylobacter fetus subsp. fetus (strain 82-40).